Here is a 104-residue protein sequence, read N- to C-terminus: Replication restart protein PriB (104 aa).

In terms of domain architecture, SSB spans 1–101 (MTNRLELSGV…LHADHIEIIC (101 aa)).

The protein belongs to the PriB family. Homodimer. Interacts with PriA and DnaT. Component of the replication restart primosome. Primosome assembly occurs via a 'hand-off' mechanism. PriA binds to replication forks, subsequently PriB then DnaT bind; DnaT then displaces ssDNA to generate the helicase loading substrate.

In terms of biological role, involved in the restart of stalled replication forks, which reloads the replicative helicase on sites other than the origin of replication; the PriA-PriB pathway is the major replication restart pathway. During primosome assembly it facilitates complex formation between PriA and DnaT on DNA; stabilizes PriA on DNA. Stimulates the DNA unwinding activity of PriA helicase. This Photobacterium profundum (strain SS9) protein is Replication restart protein PriB.